Reading from the N-terminus, the 130-residue chain is MFMIKKKKNKNKFKKNINLGIAHIHTTFNNTILTITDLQGNTITWSSAGSLGFKGSRKSTPFAAQIASSTAAKAALEHGMLKVEVFIKGPGAGREASIRSLQASGLEITSIRDVTTVPHNGCRPPKRPRG.

This sequence belongs to the universal ribosomal protein uS11 family. As to quaternary structure, part of the 30S ribosomal subunit. Interacts with proteins S7 and S18. Binds to IF-3.

Its function is as follows. Located on the platform of the 30S subunit, it bridges several disparate RNA helices of the 16S rRNA. Forms part of the Shine-Dalgarno cleft in the 70S ribosome. This Phytoplasma mali (strain AT) protein is Small ribosomal subunit protein uS11.